Consider the following 106-residue polypeptide: COX assembly mitochondrial protein homolog (106 aa).

Ala2 is modified (N-acetylalanine). In terms of domain architecture, CHCH spans 28–71 (RERCSEQVEDFTRCCKDSGILMVLKCRKENSALKDCLTAYYNDP). Short sequence motifs (cx9C motif) lie at residues 31-41 (CSEQVEDFTRC) and 53-63 (CRKENSALKDC). 2 disulfides stabilise this stretch: Cys31/Cys63 and Cys41/Cys53.

This sequence belongs to the CMC family. In terms of assembly, component of the MITRAC (mitochondrial translation regulation assembly intermediate of cytochrome c oxidase complex) complex, the core components of this complex being COA3/MITRAC12 and COX14.

The protein resides in the mitochondrion. In terms of biological role, component of the MITRAC (mitochondrial translation regulation assembly intermediate of cytochrome c oxidase complex) complex, that regulates cytochrome c oxidase assembly. This chain is COX assembly mitochondrial protein homolog (Cmc1), found in Mus musculus (Mouse).